We begin with the raw amino-acid sequence, 313 residues long: Protein TIC 22-like, chloroplastic (313 aa).

The transit peptide at 1–96 (MNSNIFPPSK…RISDDGGGAR (96 aa)) directs the protein to the chloroplast.

This sequence belongs to the Tic22 family.

The protein localises to the plastid. Its subcellular location is the chloroplast intermembrane space. Involved in protein precursor import into chloroplasts. The chain is Protein TIC 22-like, chloroplastic (TIC22L) from Arabidopsis thaliana (Mouse-ear cress).